The following is a 205-amino-acid chain: MIIQKIEFNDKKDKFVIETDTKESFLLSYNDFEKFKIHNEMIIDDELYAHLLNISKFGEAFDISLNFLSYKLRTEKEIITKLKSKKFSTEIIDDVITKLKNLDLLDDYNYAKIFINDKINLTNYSKRRIINDLYQKGIDKKIYEDYLEEVFGYNMELDKATLIVETKINIWKEKYEGYELKNKIFTFLLQKGFSYDVAKQISGMY.

Belongs to the RecX family.

It is found in the cytoplasm. Modulates RecA activity. This chain is Regulatory protein RecX, found in Finegoldia magna (strain ATCC 29328 / DSM 20472 / WAL 2508) (Peptostreptococcus magnus).